The primary structure comprises 347 residues: Protein RecA (347 aa).

G67–T74 contacts ATP.

It belongs to the RecA family.

It localises to the cytoplasm. Its function is as follows. Can catalyze the hydrolysis of ATP in the presence of single-stranded DNA, the ATP-dependent uptake of single-stranded DNA by duplex DNA, and the ATP-dependent hybridization of homologous single-stranded DNAs. It interacts with LexA causing its activation and leading to its autocatalytic cleavage. This is Protein RecA from Helicobacter pylori (strain G27).